The following is a 786-amino-acid chain: Signal transducer and activator of transcription 5B (786 aa).

Position 90 is a phosphotyrosine (Tyr90). Ser128 carries the post-translational modification Phosphoserine. The 98-residue stretch at 589-686 (WNDGAILGFV…EVYSKYYTPV (98 aa)) folds into the SH2 domain. Phosphotyrosine occurs at positions 682 and 699.

The protein belongs to the transcription factor STAT family. Upon activation, forms a homodimer or a heterodimer with a related family member. Binds NR3C1. Interacts with NCOA1. Interacts with NMI. Interacts with SOCS7. Interacts (via SH2 domain) with INSR. Interacts with CPEB3; this inhibits STAT5B-mediated transcriptional activation. In terms of processing, tyrosine phosphorylated in response to signaling via activated KIT, resulting in translocation to the nucleus. Tyrosine phosphorylated in response to signaling via activated FLT3; wild-type FLT3 results in much weaker phosphorylation than constitutively activated mutant FLT3. Alternatively, can be phosphorylated by JAK2. Phosphorylation at Tyr-699 by PTK6 or HCK leads to an increase of its transcriptional activity.

Its subcellular location is the cytoplasm. The protein localises to the nucleus. In terms of biological role, carries out a dual function: signal transduction and activation of transcription. Mediates cellular responses to the cytokine KITLG/SCF and other growth factors. Binds to the GAS element and activates PRL-induced transcription. Positively regulates hematopoietic/erythroid differentiation. The polypeptide is Signal transducer and activator of transcription 5B (Stat5b) (Rattus norvegicus (Rat)).